The chain runs to 439 residues: GTPase Der (439 aa).

EngA-type G domains are found at residues 2–168 (ATVL…EEKG) and 181–357 (IKIA…SSYT). Residues 8 to 15 (GKPNVGKS), 55 to 59 (DTCGV), 118 to 121 (NKTE), 187 to 194 (GRPNVGKS), 234 to 238 (DTAGL), and 300 to 303 (NKWD) contribute to the GTP site. One can recognise a KH-like domain in the interval 358–439 (TKVPSSALNS…PIFLKFKKSR (82 aa)).

The protein belongs to the TRAFAC class TrmE-Era-EngA-EngB-Septin-like GTPase superfamily. EngA (Der) GTPase family. As to quaternary structure, associates with the 50S ribosomal subunit.

In terms of biological role, GTPase that plays an essential role in the late steps of ribosome biogenesis. The chain is GTPase Der from Thermotoga neapolitana (strain ATCC 49049 / DSM 4359 / NBRC 107923 / NS-E).